The sequence spans 366 residues: Ribosomal RNA large subunit methyltransferase M (366 aa).

Residues S188, 221–224, D240, D260, and D277 contribute to the S-adenosyl-L-methionine site; that span reads CPGG. The active-site Proton acceptor is the K306.

This sequence belongs to the class I-like SAM-binding methyltransferase superfamily. RNA methyltransferase RlmE family. RlmM subfamily. In terms of assembly, monomer.

It is found in the cytoplasm. The enzyme catalyses cytidine(2498) in 23S rRNA + S-adenosyl-L-methionine = 2'-O-methylcytidine(2498) in 23S rRNA + S-adenosyl-L-homocysteine + H(+). Functionally, catalyzes the 2'-O-methylation at nucleotide C2498 in 23S rRNA. This Erwinia tasmaniensis (strain DSM 17950 / CFBP 7177 / CIP 109463 / NCPPB 4357 / Et1/99) protein is Ribosomal RNA large subunit methyltransferase M.